The sequence spans 160 residues: Ribosomal RNA large subunit methyltransferase H (160 aa).

S-adenosyl-L-methionine contacts are provided by residues L78, G109, and 128–133 (LSNLTL).

Belongs to the RNA methyltransferase RlmH family. In terms of assembly, homodimer.

The protein localises to the cytoplasm. It catalyses the reaction pseudouridine(1915) in 23S rRNA + S-adenosyl-L-methionine = N(3)-methylpseudouridine(1915) in 23S rRNA + S-adenosyl-L-homocysteine + H(+). Specifically methylates the pseudouridine at position 1915 (m3Psi1915) in 23S rRNA. This Alcanivorax borkumensis (strain ATCC 700651 / DSM 11573 / NCIMB 13689 / SK2) protein is Ribosomal RNA large subunit methyltransferase H.